The primary structure comprises 93 residues: Phosphoribosyl-ATP pyrophosphatase (93 aa).

The protein belongs to the PRA-PH family.

It localises to the cytoplasm. The catalysed reaction is 1-(5-phospho-beta-D-ribosyl)-ATP + H2O = 1-(5-phospho-beta-D-ribosyl)-5'-AMP + diphosphate + H(+). The protein operates within amino-acid biosynthesis; L-histidine biosynthesis; L-histidine from 5-phospho-alpha-D-ribose 1-diphosphate: step 2/9. This chain is Phosphoribosyl-ATP pyrophosphatase, found in Mycolicibacterium smegmatis (strain ATCC 700084 / mc(2)155) (Mycobacterium smegmatis).